Consider the following 1669-residue polypeptide: Collagen alpha-1(IV) chain (1669 aa).

Residues 1-27 (MGPRLSVWLLLLPAALLLHEEHSRAAA) form the signal peptide. Positions 28 to 172 (KGGCAGSGCG…LGHVPGMLLK (145 aa)) are cleaved as a propeptide — N-terminal propeptide (7S domain). 3 disordered regions span residues 48–459 (KGER…EIGE), 504–1382 (GRDG…PKGQ), and 1404–1431 (PGQKGEMGPAGPTGPRGFPGPPGPDGLP). N-linked (GlcNAc...) asparagine glycosylation is present at asparagine 126. Positions 173–1440 (GERGFPGIPG…PGSMGPPGTP (1268 aa)) are triple-helical region. Residues 196-214 (VGPPGFTGPPGPPGPPGPP) are compositionally biased toward pro residues. 3-hydroxyproline is present on residues proline 204, proline 207, and proline 210. Residues 234-249 (QGVSGPPGVPGQAQVQ) are compositionally biased toward low complexity. Composition is skewed to basic and acidic residues over residues 250 to 263 (EKGDFATKGEKGQK) and 289 to 298 (PGKDGDKGEK). Composition is skewed to pro residues over residues 367 to 376 (PGQPGPPGLP), 413 to 424 (PGPPGSPGPPGQ), and 436 to 448 (PGPPGDQGPPGIP). A compositionally biased stretch (basic and acidic residues) spans 535–545 (FDLRLKGDKGD). The span at 586–595 (GPPGGVGFPG) shows a compositional bias: gly residues. Residues proline 587 and proline 602 each carry the 3-hydroxyproline modification. Proline 603 is modified (4-hydroxyproline). Position 605 is a 3-hydroxyproline (proline 605). Proline 606 carries the 4-hydroxyproline modification. A compositionally biased stretch (low complexity) spans 611 to 620 (AGPIGDKGQA). Residues 621-630 (GFPGGPGSPG) show a composition bias toward gly residues. Residues proline 623, proline 626, proline 629, and proline 632 each carry the 4-hydroxyproline modification. Proline 647 carries the post-translational modification 3-hydroxyproline. A compositionally biased stretch (gly residues) spans 797–817 (GVPGIGPPGARGPPGGQGPPG). Composition is skewed to low complexity over residues 856 to 875 (QSGLPGLPGQQGAPGIPGFP) and 977 to 986 (PGKDGQAGQP). The segment covering 1011–1020 (GSVGGMGLPG) has biased composition (gly residues). The segment covering 1086–1114 (SIGIPGMPGSPGLKGSPGSVGYPGSPGLP) has biased composition (low complexity). The residue at position 1214 (proline 1214) is a 3-hydroxyproline. The span at 1247–1258 (PGLPGPMGPPGL) shows a compositional bias: pro residues. Residues 1290-1299 (GMPGIGGSPG) are compositionally biased toward gly residues. Low complexity predominate over residues 1368–1382 (PGLKGLQGLPGPKGQ). Proline 1424 carries the 3-hydroxyproline modification. Residues 1445-1669 (GFLVTRHSQT…SRCQVCMRRT (225 aa)) enclose the Collagen IV NC1 domain. 6 cysteine pairs are disulfide-bonded: cysteine 1460-cysteine 1551, cysteine 1493-cysteine 1548, cysteine 1505-cysteine 1511, cysteine 1570-cysteine 1665, cysteine 1604-cysteine 1662, and cysteine 1616-cysteine 1622. Methionine 1533 is covalently cross-linked (S-Lysyl-methionine sulfilimine (Met-Lys) (interchain with K-1651)). Lysine 1651 is covalently cross-linked (S-Lysyl-methionine sulfilimine (Lys-Met) (interchain with M-1533)).

The protein belongs to the type IV collagen family. As to quaternary structure, there are six type IV collagen isoforms, alpha 1(IV)-alpha 6(IV), each of which can form a triple helix structure with 2 other chains to generate type IV collagen network. Interacts with EFEMP2. Lysines at the third position of the tripeptide repeating unit (G-X-Y) are hydroxylated. The modified lysines can be O-glycosylated. In terms of processing, contains 4-hydroxyproline. Prolines at the third position of the tripeptide repeating unit (G-X-Y) are hydroxylated in some or all of the chains. Post-translationally, contains 3-hydroxyproline. This modification occurs on the first proline residue in the sequence motif Gly-Pro-Hyp, where Hyp is 4-hydroxyproline. Type IV collagens contain numerous cysteine residues which are involved in inter- and intramolecular disulfide bonding. 12 of these, located in the NC1 domain, are conserved in all known type IV collagens. In terms of processing, the trimeric structure of the NC1 domains is stabilized by covalent bonds (sulfilimine cross-links) between Lys and Met residues. These cross-links are important for the mechanical stability of the basement membrane. Sulfilimine cross-link is catalyzed by PXDN. Post-translationally, proteolytic processing produces the C-terminal NC1 peptide, arresten. As to expression, highly expressed in placenta.

Its subcellular location is the secreted. It localises to the extracellular space. It is found in the extracellular matrix. The protein localises to the basement membrane. Type IV collagen is the major structural component of glomerular basement membranes (GBM), forming a 'chicken-wire' meshwork together with laminins, proteoglycans and entactin/nidogen. Its function is as follows. Arresten, comprising the C-terminal NC1 domain, inhibits angiogenesis and tumor formation. The C-terminal half is found to possess the anti-angiogenic activity. Specifically inhibits endothelial cell proliferation, migration and tube formation. In Homo sapiens (Human), this protein is Collagen alpha-1(IV) chain.